The sequence spans 119 residues: MGTRTLQFEISDSHEKEEDLLHKNHLMQDEIARLRLEIHTIKNQILEKKYLKDIEIIKRKHEDLQKALKQNGEKSTKTIAHYSGQLTALTDENTMLRSKLEKEKQSRQRLTKWNHTIVD.

Positions 15–112 (EKEEDLLHKN…EKQSRQRLTK (98 aa)) form a coiled coil.

The protein is Putative ankyrin repeat domain-containing protein 26-like 1 (ANKRD36BP1) of Homo sapiens (Human).